A 108-amino-acid chain; its full sequence is Pyrimidine/purine nucleoside phosphorylase (108 aa).

This sequence belongs to the nucleoside phosphorylase PpnP family.

The catalysed reaction is a purine D-ribonucleoside + phosphate = a purine nucleobase + alpha-D-ribose 1-phosphate. It catalyses the reaction adenosine + phosphate = alpha-D-ribose 1-phosphate + adenine. The enzyme catalyses cytidine + phosphate = cytosine + alpha-D-ribose 1-phosphate. It carries out the reaction guanosine + phosphate = alpha-D-ribose 1-phosphate + guanine. The catalysed reaction is inosine + phosphate = alpha-D-ribose 1-phosphate + hypoxanthine. It catalyses the reaction thymidine + phosphate = 2-deoxy-alpha-D-ribose 1-phosphate + thymine. The enzyme catalyses uridine + phosphate = alpha-D-ribose 1-phosphate + uracil. It carries out the reaction xanthosine + phosphate = alpha-D-ribose 1-phosphate + xanthine. In terms of biological role, catalyzes the phosphorolysis of diverse nucleosides, yielding D-ribose 1-phosphate and the respective free bases. Can use uridine, adenosine, guanosine, cytidine, thymidine, inosine and xanthosine as substrates. Also catalyzes the reverse reactions. In Polaromonas sp. (strain JS666 / ATCC BAA-500), this protein is Pyrimidine/purine nucleoside phosphorylase.